We begin with the raw amino-acid sequence, 741 residues long: Oosporein cluster regulator OpS3 (741 aa).

Residues 16–39 (GRPARGQSTTTRSRNTQQSAPTSQ) form a disordered region. Residues 20-34 (RGQSTTTRSRNTQQS) show a composition bias toward low complexity. Positions 44–69 (CRRCRQHRIKCSEKPCEPCRANNSKC) form a DNA-binding region, zn(2)-C6 fungal-type. The segment at 139 to 167 (HPNTPNSCPSQSGDIRQQQIPCSQHASPA) is disordered. A coiled-coil region spans residues 473 to 500 (TAGQSMARLSETIRQLETALDELPEQLL). The interval 501–528 (TRHGSRTPTNNGQTHRSRPTCSTMPHTN) is disordered. Positions 506–528 (RTPTNNGQTHRSRPTCSTMPHTN) are enriched in polar residues.

The protein localises to the nucleus. Functionally, transcription factor involved in regulation of gene cluster that mediates the biosynthesis of oosporein, a metabolite required for fungal virulence that acts by evading host immunity to facilitate fungal multiplication in insects. Binds oosporein cluster genes at a conserved 5'-CGGA-3' motif with the exception of OpS5. The presence of this motif in the OpS3 promoter would suggest the formation of a positive feedback loop for self-activation. This chain is Oosporein cluster regulator OpS3, found in Beauveria bassiana (strain ARSEF 2860) (White muscardine disease fungus).